The following is a 557-amino-acid chain: Potassium-transporting ATPase potassium-binding subunit (557 aa).

Helical transmembrane passes span 6-26, 59-79, 127-147, 172-192, 247-267, 278-298, 363-383, 410-430, 475-495, and 520-540; these read IQLL…GLGL, ALSL…ILFF, AGLT…LLAL, LYVL…FGVV, ISNF…VFLY, WAIF…VWTF, IVFG…LLTV, ILGI…SVSV, VMIA…VLVI, and FYIL…FPVL.

This sequence belongs to the KdpA family. The system is composed of three essential subunits: KdpA, KdpB and KdpC.

The protein localises to the cell inner membrane. In terms of biological role, part of the high-affinity ATP-driven potassium transport (or Kdp) system, which catalyzes the hydrolysis of ATP coupled with the electrogenic transport of potassium into the cytoplasm. This subunit binds the periplasmic potassium ions and delivers the ions to the membrane domain of KdpB through an intramembrane tunnel. In Leptospira interrogans serogroup Icterohaemorrhagiae serovar Lai (strain 56601), this protein is Potassium-transporting ATPase potassium-binding subunit.